The chain runs to 1502 residues: MLSNENLNSEEIIRELCACNGLSFEKIRQDGPATTTLEMFFSGYPKMAGLSYFPNLTQLILVGQNIHCIAGLESCHFLKELWITECHLSKIQGLHHCADLQKLYLYHNEISVIEGLENLLKLEVLWLNNNQINVIEGLDMMQNLKELNLANNLIHSIGESLDPNVQLERLNLSGNKISSFKELTNLARLPSLMDLGLKDPQYSPNPVCLLCNYAIHVLYHIPQLQRLDTYDVSEKQIKNLAESTVVKKIMYYNMRMKNNQRQQREELEKVRERTSKAKQVPENRIRALSFLVKNLEHELTDMKSSGNMQANIPISNKFHENNCDTEESNSQQSSERRKNNSDRLEQIHKKICALKERMIFWTRKLSEVEKHHEEKCRRMKDSFHLLDQFLQTELETVGNVRFEEGTAADSWFKSCYDLIVSRFCAMNFRAYGISGIKIHRIVRVHNRILRLKFEDKVQYWMDNEDLYTTESYKKKLEYLFYIFDPKLPIDKKELLHVLENGCNITRSSQLPEQEQVEAVLLTNSMSLCEGPRLEFLQKQAMNKSCDPEAFKDGIIVIAKVFLGRSVKARDDLPIKPNNYAKVNSVYRLQKFANSTFNSLNDEICSSKEHGNCDCSLRQCEWLVFDHEFILPEYVVEFEYISMEKSSGFVTPSNENAEDVSHDLKLDEDAIALEPFLKPKPKIISLDEKTVLSVARANIYSQITVLNLHGNSLSKLKDISRLNGLRKLIISFNEFSSLEDVSYLTNLEYLDASHNQVITLEGFKGLGKLKYLDLSWNKLTNSREDLHILRKHAIQLSSLDIRYNFWQKPASVLKDTIAILPSLTHLNGVTITEDEISEALQISSGSRITQASLLINARTDTVKPRCLNLLPSAQILAQFSKNCLDPNAELSNSWYTKITSLTLDSQNLVRITNLEKLVNLRWASFSSNHLTKIEGLEHCVNLEELNLDDNSISKLEGLSKLTKLRRLSINNNLLAGFDRHVIESLSHLHFLSAENNNISSLAGLQRGYKLIELYLSNNCISSNQEIYSLKGLNNLVILDMWGNPILLKHENYRLFVIFHLSAIKALDGVAVEPSECENAKDMFGGRLTSDMIAERIGHQRFTELQDLNWRTSSIRSIDLVPADHFRNVQTVNLENNNLTSFSGLIFLPNIKNLYLNHNRIESILPQQKSQSHLTNRQILHQKVSSSGYGQQGTSKGSRDTVYGEALSPVMQSLEVLHLGYNGINSLPMLQLGRLRNLKSLYLQGNEISHVEGLENLQFLRELVLDHNRIKAIAETSFAKLNSLVSLNLEENRLRDLNNLPPLLKLRKLLIGSNKIQEISEIEKLEVIPALVELSISGNPISRKPFLRNLLVVRLQNLQILDGILITAEDRARAEMYFMEQQSLTVPNAVMDLGNPVSTMIVSKPLPLRVTNFPLAGGAHHSLGADLHFNNGHEDIFQNEANKYKKLKNYTVGVGHNPQNTQDIALRQLRGGTHFPASYLTQQSGQARSQQKHPFNQENEGRCV.

LRR repeat units lie at residues 53–79, 97–119, 120–141, 142–164, 166–188, 224–247, 296–320, 699–721, 722–744, 746–764, 765–790, 792–814, 822–849, 894–916, 917–938, 939–960, 961–983, 985–1009, 1011–1030, 1031–1053, 1100–1123, 1124–1146, 1147–1170, 1209–1232, 1234–1255, 1256–1278, 1280–1301, 1302–1325, and 1327–1351; these read FPNL…HFLK, CADL…LENL, LKLE…LDMM, QNLK…LDPN, QLER…NLAR, LQRL…TVVK, EHEL…KFHE, YSQI…ISRL, NGLR…SYLT, LEYL…GFKG, LGKL…ILRK, AIQL…VLKD, LTHL…RITQ, YTKI…LEKL, VNLR…LEHC, VNLE…LSKL, TKLR…VIES, SHLH…GYKL, ELYL…SLKG, LNNL…NYRL, FTEL…PADH, FRNV…LIFL, PNIK…KSQS, MQSL…QLGR, RNLK…LENL, QFLR…SFAK, NSLV…LPPL, LKLR…KLEV, and PALV…LLVV. The tract at residues 317–342 is disordered; the sequence is KFHENNCDTEESNSQQSSERRKNNSD. Residues 1479–1496 are compositionally biased toward polar residues; the sequence is TQQSGQARSQQKHPFNQE. The interval 1479–1502 is disordered; the sequence is TQQSGQARSQQKHPFNQENEGRCV.

The chain is Leucine-rich repeat-containing protein 9 (lrrc9) from Xenopus tropicalis (Western clawed frog).